Here is a 424-residue protein sequence, read N- to C-terminus: Histidine--tRNA ligase (424 aa).

Belongs to the class-II aminoacyl-tRNA synthetase family. Homodimer.

The protein resides in the cytoplasm. The catalysed reaction is tRNA(His) + L-histidine + ATP = L-histidyl-tRNA(His) + AMP + diphosphate + H(+). The sequence is that of Histidine--tRNA ligase from Shewanella woodyi (strain ATCC 51908 / MS32).